The chain runs to 261 residues: Calcium-binding protein 8 (261 aa).

The tract at residues 1 to 39 (MRLPEQPGEGKPENEKKGDGGALGGGEEPPRSQAPDFPT) is disordered. At 1–234 (MRLPEQPGEG…QNRQTCVRKS (234 aa)) the chain is on the cytoplasmic side. The span at 8–19 (GEGKPENEKKGD) shows a compositional bias: basic and acidic residues. 2 EF-hand domains span residues 78–113 (EELD…LGYM) and 114–149 (PSEV…KLVS). Aspartate 91, aspartate 93, asparagine 95, glutamate 102, aspartate 127, aspartate 129, aspartate 131, glutamine 133, and glutamate 138 together coordinate Ca(2+). Residues 235–255 (LICAFAMAFIISVMLIAANQI) form a helical; Anchor for type IV membrane protein membrane-spanning segment. Residues 256 to 261 (LRSGME) are Extracellular-facing.

In terms of assembly, interacts with PI4KB. This binding competes with FREQ/NCS1 binding in a calcium-dependent manner. In terms of tissue distribution, brain specific.

Its subcellular location is the golgi apparatus. It is found in the trans-Golgi network membrane. The protein resides in the cytoplasm. It localises to the perinuclear region. The protein localises to the cell membrane. Functionally, negatively regulates Golgi-to-plasma membrane trafficking by interacting with PI4KB and inhibiting its activity. May play a role in the physiology of neurons and is potentially important in memory and learning. The chain is Calcium-binding protein 8 (CALN1) from Homo sapiens (Human).